An 857-amino-acid polypeptide reads, in one-letter code: MAELRRDSTSSLQRKKPPWLKLDIPTAHVSVDEVPAFVPPVKRQGFHRSASMPVETSHFHSPQRDIIDHRRAAFQRQSSITQTIKRGTADWFGVSKDGDATQKWQRKSLRHCSLRYGKLKPQVIREMELPSQDNISLTSTETPPPLYVPSSQHGMQKIVDPLARGRAFRMVEEVDGYSVPQTPITPGAASICSFNSSRSGLNRIPRRRKRESVAKMSFRAAAALVKGRSLREGTLRRAHRRSFTPASFIEEDVVDFPDELDTSFFARDIMMHEEMSTFHDEVFESPSDSTMKDVDSKQLDESELTGSALDKSELEKSHLMLPLERGWRKVKEKTPAPPKIRLKQEVVSVNGQRRGQRIGLPVKKLFAREKRPYGLGMVGKLTNRTYRKRIDSYVKKQIEDMDDHRPFFTYWITFVHILITILAVCIYGIAPVGFSQHETVDSVLRNKGVYENVKFVQQENFWIGPSSEALIHLGAKFSPCMRRDNQVHELIKKKQELERNSACCVRNDRSGCLQTSEEECSSTLAVWVKWPQHPSVPQLDGVARQHGSVCHQDPRTCTEPASVSPHEWPDDITKWPICTKYNSGNHTNLPHIDCTITGRPCCIGTKGRCEITSREYCDFMKGYFHEEATLCSQVHCMDDVCGLLPFLNPEVPDQFYRLWLSLFLHAGILHCLVSVCFQMTILRDLEKLAGWLRISIIYILSGITGNLASAIFLPYRAEVGPAGSQFGILACLFVELIQSWQILAQPWRAFTKLLCVVLFLFAFGLLPWIDNFAHISGFISGFFLSFAFLPYISFGRLDMYRKRCQIIIFLVVFLGLFAGLVVLFYVHPIKCEWCELLTCIPFTDKFCEKYDLNAHLH.

Topologically, residues 1–413 are cytoplasmic; the sequence is MAELRRDSTS…HRPFFTYWIT (413 aa). The interval 283–307 is disordered; the sequence is FESPSDSTMKDVDSKQLDESELTGS. The span at 290–300 shows a compositional bias: basic and acidic residues; it reads TMKDVDSKQLD. The helical transmembrane segment at 414 to 434 threads the bilayer; sequence FVHILITILAVCIYGIAPVGF. At 435–661 the chain is on the lumenal side; it reads SQHETVDSVL…PDQFYRLWLS (227 aa). N-linked (GlcNAc...) asparagine glycosylation is present at asparagine 585. A helical membrane pass occupies residues 662-682; it reads LFLHAGILHCLVSVCFQMTIL. Residues 683–693 are Cytoplasmic-facing; it reads RDLEKLAGWLR. The chain crosses the membrane as a helical span at residues 694–714; it reads ISIIYILSGITGNLASAIFLP. The Lumenal segment spans residues 715-716; that stretch reads YR. The chain crosses the membrane as a helical span at residues 717-737; it reads AEVGPAGSQFGILACLFVELI. Topologically, residues 738 to 748 are cytoplasmic; it reads QSWQILAQPWR. The chain crosses the membrane as a helical span at residues 749-769; sequence AFTKLLCVVLFLFAFGLLPWI. At 770–774 the chain is on the lumenal side; the sequence is DNFAH. Residues 775–795 form a helical membrane-spanning segment; the sequence is ISGFISGFFLSFAFLPYISFG. Residues 796–805 are Cytoplasmic-facing; it reads RLDMYRKRCQ. Residues 806–826 traverse the membrane as a helical segment; sequence IIIFLVVFLGLFAGLVVLFYV. Over 827-857 the chain is Lumenal; sequence HPIKCEWCELLTCIPFTDKFCEKYDLNAHLH.

The protein belongs to the peptidase S54 family.

The protein localises to the endoplasmic reticulum membrane. It is found in the golgi apparatus membrane. Its function is as follows. Regulates ADAM17 protease, a sheddase of the epidermal growth factor (EGF) receptor ligands and TNF, thereby plays a role in sleep, cell survival, proliferation, migration and inflammation. Does not exhibit any protease activity on its own. This Danio rerio (Zebrafish) protein is Inactive rhomboid protein 1 (rhbdf1).